A 317-amino-acid polypeptide reads, in one-letter code: Aspartate carbamoyltransferase catalytic subunit (317 aa).

The carbamoyl phosphate site is built by arginine 55 and threonine 56. Lysine 83 contacts L-aspartate. Residues arginine 105, histidine 138, and glutamine 141 each coordinate carbamoyl phosphate. Residues arginine 171 and arginine 225 each coordinate L-aspartate. Glycine 266 and proline 267 together coordinate carbamoyl phosphate.

This sequence belongs to the aspartate/ornithine carbamoyltransferase superfamily. ATCase family. As to quaternary structure, heterododecamer (2C3:3R2) of six catalytic PyrB chains organized as two trimers (C3), and six regulatory PyrI chains organized as three dimers (R2).

It carries out the reaction carbamoyl phosphate + L-aspartate = N-carbamoyl-L-aspartate + phosphate + H(+). It participates in pyrimidine metabolism; UMP biosynthesis via de novo pathway; (S)-dihydroorotate from bicarbonate: step 2/3. Functionally, catalyzes the condensation of carbamoyl phosphate and aspartate to form carbamoyl aspartate and inorganic phosphate, the committed step in the de novo pyrimidine nucleotide biosynthesis pathway. The chain is Aspartate carbamoyltransferase catalytic subunit from Mycobacteroides abscessus (strain ATCC 19977 / DSM 44196 / CCUG 20993 / CIP 104536 / JCM 13569 / NCTC 13031 / TMC 1543 / L948) (Mycobacterium abscessus).